Reading from the N-terminus, the 589-residue chain is ATP-dependent lipid A-core flippase (589 aa).

5 consecutive transmembrane segments (helical) span residues Leu29 to Leu49, Trp70 to Asp90, Val157 to Val177, Met261 to Gly281, and Leu283 to Lys303. Residues Val32–Arg314 enclose the ABC transmembrane type-1 domain. In terms of domain architecture, ABC transporter spans Ile346–Met582. An ATP-binding site is contributed by Gly380–Ser387.

This sequence belongs to the ABC transporter superfamily. Lipid exporter (TC 3.A.1.106) family. As to quaternary structure, homodimer.

Its subcellular location is the cell inner membrane. The catalysed reaction is ATP + H2O + lipid A-core oligosaccharideSide 1 = ADP + phosphate + lipid A-core oligosaccharideSide 2.. In terms of biological role, involved in lipopolysaccharide (LPS) biosynthesis. Translocates lipid A-core from the inner to the outer leaflet of the inner membrane. Transmembrane domains (TMD) form a pore in the inner membrane and the ATP-binding domain (NBD) is responsible for energy generation. The polypeptide is ATP-dependent lipid A-core flippase (Xanthomonas oryzae pv. oryzae (strain MAFF 311018)).